Here is a 493-residue protein sequence, read N- to C-terminus: MPMPQYTMQPQYPVSQPHTLPPLQPHHSQSPAPHSYMGQPPYRPDLSRYPASTHDVYASSAAPIMPHTTVGSLPPSTFLSHHNHQAQAQQSQHYPPPPHNVLPPASSAQTYPQPIAPAPPRDRRPDFNGMPSGAFSYPDGKASPWMNPDPVAAANGAGAYGAKEPPRTQVVGSQGRRGILPSVPGRVAPVTNGVNGTAKNTTIPAKDADGKFPCPHCNKTYLHAKHLKRHLLRHTGDRPYMCVLCKDTFSRSDILKRHFQKCSIRRGNPTGATHLSHPQAHLKRSQAQAAANTAKSLQEEVSSTVPPSNGIAGATFSEGAVNGNGLGAGRPGFTDQQPLGFTMQSVNGLGRGQPDDAYAHGQAHQRASWMATPKQNPYLVQPGTEAPNQQLNVDRPTLEQAKPSVVDPKRPMMPGPDPNHGGGLDWTSMFQAGASDGYINQVFPQSMASGQEPIQAQVETERKFYPTTTTAGPQEGGMNGLYLASTTLGGDGK.

Low complexity predominate over residues 1–18 (MPMPQYTMQPQYPVSQPH). Disordered stretches follow at residues 1–50 (MPMP…SRYP), 68–140 (TTVG…YPDG), and 164–202 (EPPR…KNTT). 2 stretches are compositionally biased toward polar residues: residues 69-79 (TVGSLPPSTFL) and 192-202 (NGVNGTAKNTT). The C2H2-type 1 zinc finger occupies 212 to 234 (FPCPHCNKTYLHAKHLKRHLLRH). A C2H2-type 2; degenerate zinc finger spans residues 240–265 (YMCVLCKDTFSRSDILKRHFQKCSIR). 2 stretches are compositionally biased toward polar residues: residues 288–307 (QAAA…TVPP) and 484–493 (ASTTLGGDGK). Disordered regions lie at residues 288–316 (QAAA…GATF) and 468–493 (TTTA…GDGK).

The protein belongs to the krueppel C2H2-type zinc-finger protein family.

It localises to the nucleus. In terms of biological role, transcription factor that acts in coordination with atrR to regulate the expression of the ABC-type multidrug transporter abcG1 and thus plays a role in azole susceptibility. Regulates the expression of genes involved in fermentation. Is able to promote expression from the yeast FLO11 promoter. This is C2H2-type transcription factor ffmA from Aspergillus fumigatus (strain CBS 144.89 / FGSC A1163 / CEA10) (Neosartorya fumigata).